The primary structure comprises 216 residues: Ribosomal RNA small subunit methyltransferase G (216 aa).

S-adenosyl-L-methionine contacts are provided by residues G83, M88, V134–E135, and R149.

This sequence belongs to the methyltransferase superfamily. RNA methyltransferase RsmG family.

Its subcellular location is the cytoplasm. The enzyme catalyses guanosine(527) in 16S rRNA + S-adenosyl-L-methionine = N(7)-methylguanosine(527) in 16S rRNA + S-adenosyl-L-homocysteine. Specifically methylates the N7 position of guanine in position 527 of 16S rRNA. The chain is Ribosomal RNA small subunit methyltransferase G from Pseudomonas putida (strain ATCC 700007 / DSM 6899 / JCM 31910 / BCRC 17059 / LMG 24140 / F1).